A 293-amino-acid polypeptide reads, in one-letter code: Delta(3,5)-Delta(2,4)-dienoyl-CoA isomerase, mitochondrial (293 aa).

Substrate contacts are provided by residues Ala84 to Leu88 and Gly142.

The protein belongs to the enoyl-CoA hydratase/isomerase family.

The protein resides in the mitochondrion. It catalyses the reaction (3E,5Z)-octadienoyl-CoA = (2E,4E)-octadienoyl-CoA. It carries out the reaction (3E,5Z,8Z,11Z,14Z)-eicosapentaenoyl-CoA = (2E,4E,8Z,11Z,14Z)-eicosapentaenoyl-CoA. The protein operates within lipid metabolism; fatty acid beta-oxidation. Its function is as follows. Isomerization of 3-trans,5-cis-dienoyl-CoA to 2-trans,4-trans-dienoyl-CoA. The sequence is that of Delta(3,5)-Delta(2,4)-dienoyl-CoA isomerase, mitochondrial (ech1) from Dictyostelium discoideum (Social amoeba).